We begin with the raw amino-acid sequence, 478 residues long: UDP-N-acetylmuramate--L-alanine ligase (478 aa).

130 to 136 (GTHGKTT) is an ATP binding site.

Belongs to the MurCDEF family.

Its subcellular location is the cytoplasm. It carries out the reaction UDP-N-acetyl-alpha-D-muramate + L-alanine + ATP = UDP-N-acetyl-alpha-D-muramoyl-L-alanine + ADP + phosphate + H(+). Its pathway is cell wall biogenesis; peptidoglycan biosynthesis. Cell wall formation. In Microcystis aeruginosa (strain NIES-843 / IAM M-2473), this protein is UDP-N-acetylmuramate--L-alanine ligase.